The chain runs to 560 residues: NAD(P)H-quinone oxidoreductase chain 4-3 (560 aa).

14 helical membrane-spanning segments follow: residues 5-25 (FPWL…IPLL), 35-55 (WYAL…FWHH), 86-106 (ISMP…LAAW), 114-134 (LFYF…VAQD), 135-155 (LLLF…LVSI), 168-188 (FLLY…AMAL), 208-228 (ALEL…LAIF), 242-262 (SAPV…YGLI), 273-293 (HIYF…YGGL), 310-330 (VSHM…GVSG), 331-351 (AMLQ…LAGV), 374-394 (VFAL…MSGF), 417-437 (VMVF…LSML), and 488-508 (VFIA…PKIA).

The protein belongs to the complex I subunit 4 family.

Its subcellular location is the cellular thylakoid membrane. It catalyses the reaction a plastoquinone + NADH + (n+1) H(+)(in) = a plastoquinol + NAD(+) + n H(+)(out). The catalysed reaction is a plastoquinone + NADPH + (n+1) H(+)(in) = a plastoquinol + NADP(+) + n H(+)(out). NDH-1 shuttles electrons from NAD(P)H, via FMN and iron-sulfur (Fe-S) centers, to quinones in the respiratory chain. The immediate electron acceptor for the enzyme in this species is believed to be plastoquinone. Couples the redox reaction to proton translocation (for every two electrons transferred, four hydrogen ions are translocated across the cytoplasmic membrane), and thus conserves the redox energy in a proton gradient. This Nostoc sp. (strain PCC 7120 / SAG 25.82 / UTEX 2576) protein is NAD(P)H-quinone oxidoreductase chain 4-3 (ndhD3).